Reading from the N-terminus, the 236-residue chain is 1-(5-phosphoribosyl)-5-[(5-phosphoribosylamino)methylideneamino] imidazole-4-carboxamide isomerase (236 aa).

Residue Asp8 is the Proton acceptor of the active site. The Proton donor role is filled by Asp129.

This sequence belongs to the HisA/HisF family.

It localises to the cytoplasm. It carries out the reaction 1-(5-phospho-beta-D-ribosyl)-5-[(5-phospho-beta-D-ribosylamino)methylideneamino]imidazole-4-carboxamide = 5-[(5-phospho-1-deoxy-D-ribulos-1-ylimino)methylamino]-1-(5-phospho-beta-D-ribosyl)imidazole-4-carboxamide. The protein operates within amino-acid biosynthesis; L-histidine biosynthesis; L-histidine from 5-phospho-alpha-D-ribose 1-diphosphate: step 4/9. This is 1-(5-phosphoribosyl)-5-[(5-phosphoribosylamino)methylideneamino] imidazole-4-carboxamide isomerase from Methanocorpusculum labreanum (strain ATCC 43576 / DSM 4855 / Z).